The following is a 663-amino-acid chain: DNA topoisomerase 1 (663 aa).

The region spanning 4–137 (SWLIITEKDN…TVKVDRVRYS (134 aa)) is the Toprim domain. The Mg(2+) site is built by Glu-10 and Asp-106. Residues 155–558 (DFNLANAALA…ESREMLLQIL (404 aa)) form the Topo IA-type catalytic domain. The interaction with DNA stretch occupies residues 193 to 198 (SVGRVQ). Tyr-306 functions as the O-(5'-phospho-DNA)-tyrosine intermediate in the catalytic mechanism. The C4-type 1 zinc-finger motif lies at 583–610 (CPECGGELVVRQSKAGKRFIGCSNYPDC). The C4-type 2; atypical zinc finger occupies 629 to 653 (CKEHEIKEVKIRTKKGYWNLGCPYC).

Belongs to the type IA topoisomerase family. As to quaternary structure, monomer. Mg(2+) serves as cofactor.

The catalysed reaction is ATP-independent breakage of single-stranded DNA, followed by passage and rejoining.. Functionally, releases the supercoiling and torsional tension of DNA, which is introduced during the DNA replication and transcription, by transiently cleaving and rejoining one strand of the DNA duplex. Introduces a single-strand break via transesterification at a target site in duplex DNA. The scissile phosphodiester is attacked by the catalytic tyrosine of the enzyme, resulting in the formation of a DNA-(5'-phosphotyrosyl)-enzyme intermediate and the expulsion of a 3'-OH DNA strand. The free DNA strand then undergoes passage around the unbroken strand, thus removing DNA supercoils. Finally, in the religation step, the DNA 3'-OH attacks the covalent intermediate to expel the active-site tyrosine and restore the DNA phosphodiester backbone. This is DNA topoisomerase 1 from Archaeoglobus fulgidus (strain ATCC 49558 / DSM 4304 / JCM 9628 / NBRC 100126 / VC-16).